The chain runs to 816 residues: Neuronal PAS domain-containing protein 2 (816 aa).

Basic and acidic residues predominate over residues 1–10 (MDEDEKDRAK). The segment at 1–21 (MDEDEKDRAKRASRNKSEKKR) is disordered. Residues 1-61 (MDEDEKDRAK…VIGFLQKHNE (61 aa)) are sufficient for heterodimer formation with BMAL1, E-box binding and for the effect of NADPH. Residues 9 to 59 (AKRASRNKSEKKRRDQFNVLIKELSSMLPGNTRKMDKTTVLEKVIGFLQKH) enclose the bHLH domain. The PAS 1 domain occupies 82-152 (NEEFTQLMLE…KILSSHMLVT (71 aa)). Heme b is bound by residues His-119 and His-171. The 71-residue stretch at 237–307 (FLKEMCVADE…RCHQHLMQFG (71 aa)) folds into the PAS 2 domain. Residues 311–354 (SCCYRFLTKGQQWIWLQTHYYITYHQWNSKPEFIVCTHSVVSYA) enclose the PAC domain. Disordered regions lie at residues 364–431 (LALE…STPT), 610–639 (ISAQ…SQFS), 685–705 (QPMM…RTGR), and 742–816 (PSFP…LSES). Over residues 400-413 (SGLPSSPSPSASSR) the composition is skewed to low complexity. Polar residues predominate over residues 420 to 431 (HTAMSEPTSTPT). The segment covering 623-639 (LLPASGRSLSSLPSQFS) has biased composition (low complexity). The segment covering 745 to 759 (PASRPSPLQPAQAQQ) has biased composition (low complexity). The segment covering 780–789 (LLSTFSQQPG) has biased composition (polar residues). The span at 806–816 (PSRRVSRLSES) shows a compositional bias: basic residues.

In terms of assembly, component of the circadian clock oscillator which includes the CRY proteins, CLOCK or NPAS2, BMAL1 or BMAL2, CSNK1D and/or CSNK1E, TIMELESS and the PER proteins. Efficient DNA binding requires dimerization with another bHLH protein. Interacts with NCOA3, KAT2B and CREBBP. Forms a heterodimer with BMAL1 and this heterodimerization is required for E-box-dependent transactivation. Interacts with EP300. Requires heme as cofactor. Expressed in the retinal ganglion cells (at protein level). Expressed in the hypothalamic suprachiasmatic nuclei (SCN) of the brain. Also found in spinal cord, and to a lesser extent in colon, small intestine and uterus. Exhibits a diurnal variation in its expression in the brain.

It is found in the nucleus. Its activity is regulated as follows. Carbon monoxide (CO) and the redox state of the cell can modulate the transcriptional activity of the NPAS2-BMAL1 heterodimer. NADH and NADPH enhance the DNA-binding activity of the heterodimer whereas CO binds the heme group in NPAS2 and inhibits the DNA-binding activity of the heterodimer. In terms of biological role, transcriptional activator which forms a core component of the circadian clock. The circadian clock, an internal time-keeping system, regulates various physiological processes through the generation of approximately 24 hour circadian rhythms in gene expression, which are translated into rhythms in metabolism and behavior. It is derived from the Latin roots 'circa' (about) and 'diem' (day) and acts as an important regulator of a wide array of physiological functions including metabolism, sleep, body temperature, blood pressure, endocrine, immune, cardiovascular, and renal function. Consists of two major components: the central clock, residing in the suprachiasmatic nucleus (SCN) of the brain, and the peripheral clocks that are present in nearly every tissue and organ system. Both the central and peripheral clocks can be reset by environmental cues, also known as Zeitgebers (German for 'timegivers'). The predominant Zeitgeber for the central clock is light, which is sensed by retina and signals directly to the SCN. The central clock entrains the peripheral clocks through neuronal and hormonal signals, body temperature and feeding-related cues, aligning all clocks with the external light/dark cycle. Circadian rhythms allow an organism to achieve temporal homeostasis with its environment at the molecular level by regulating gene expression to create a peak of protein expression once every 24 hours to control when a particular physiological process is most active with respect to the solar day. Transcription and translation of core clock components (CLOCK, NPAS2, BMAL1, BMAL2, PER1, PER2, PER3, CRY1 and CRY2) plays a critical role in rhythm generation, whereas delays imposed by post-translational modifications (PTMs) are important for determining the period (tau) of the rhythms (tau refers to the period of a rhythm and is the length, in time, of one complete cycle). A diurnal rhythm is synchronized with the day/night cycle, while the ultradian and infradian rhythms have a period shorter and longer than 24 hours, respectively. Disruptions in the circadian rhythms contribute to the pathology of cardiovascular diseases, cancer, metabolic syndromes and aging. A transcription/translation feedback loop (TTFL) forms the core of the molecular circadian clock mechanism. Transcription factors, CLOCK or NPAS2 and BMAL1 or BMAL2, form the positive limb of the feedback loop, act in the form of a heterodimer and activate the transcription of core clock genes and clock-controlled genes (involved in key metabolic processes), harboring E-box elements (5'-CACGTG-3') within their promoters. The core clock genes: PER1/2/3 and CRY1/2 which are transcriptional repressors form the negative limb of the feedback loop and interact with the CLOCK|NPAS2-BMAL1|BMAL2 heterodimer inhibiting its activity and thereby negatively regulating their own expression. This heterodimer also activates nuclear receptors NR1D1/2 and RORA/B/G, which form a second feedback loop and which activate and repress BMAL1 transcription, respectively. The NPAS2-BMAL1 heterodimer positively regulates the expression of MAOA, F7 and LDHA and modulates the circadian rhythm of daytime contrast sensitivity by regulating the rhythmic expression of adenylate cyclase type 1 (ADCY1) in the retina. NPAS2 plays an important role in sleep homeostasis and in maintaining circadian behaviors in normal light/dark and feeding conditions and in the effective synchronization of feeding behavior with scheduled food availability. Regulates the gene transcription of key metabolic pathways in the liver and is involved in DNA damage response by regulating several cell cycle and DNA repair genes. Controls the circadian rhythm of NR0B2 expression by binding rhythmically to its promoter. Mediates the diurnal variation in the expression of GABARA1 receptor in the brain and contributes to the regulation of anxiety-like behaviors and GABAergic neurotransmission in the ventral striatum. The polypeptide is Neuronal PAS domain-containing protein 2 (Npas2) (Mus musculus (Mouse)).